The chain runs to 669 residues: Methionine--tRNA ligase (669 aa).

The short motif at 15-25 (PYANGPAHIGH) is the 'HIGH' region element. Positions 146, 149, 158, and 162 each coordinate Zn(2+). A 'KMSKS' region motif is present at residues 328 to 332 (KFSKS). Lys331 lines the ATP pocket. Residues 570–669 (QFKALDLRVG…KEVPAGCGIR (100 aa)) enclose the tRNA-binding domain.

The protein belongs to the class-I aminoacyl-tRNA synthetase family. MetG type 1 subfamily. In terms of assembly, homodimer. The cofactor is Zn(2+).

The protein resides in the cytoplasm. The enzyme catalyses tRNA(Met) + L-methionine + ATP = L-methionyl-tRNA(Met) + AMP + diphosphate. In terms of biological role, is required not only for elongation of protein synthesis but also for the initiation of all mRNA translation through initiator tRNA(fMet) aminoacylation. The polypeptide is Methionine--tRNA ligase (Methanothrix thermoacetophila (strain DSM 6194 / JCM 14653 / NBRC 101360 / PT) (Methanosaeta thermophila)).